The sequence spans 215 residues: Cytochrome b6 (215 aa).

The helical transmembrane segment at 32 to 52 threads the bilayer; sequence IFYCLGGITLTCFLVQVATGF. A heme c-binding site is contributed by cysteine 35. Heme b is bound by residues histidine 86 and histidine 100. A run of 3 helical transmembrane segments spans residues 90-110, 116-136, and 186-206; these read ASMM…TGGF, LTWV…VTGY, and LHTF…FPMI. 2 residues coordinate heme b: histidine 187 and histidine 202.

The protein belongs to the cytochrome b family. PetB subfamily. In terms of assembly, the 4 large subunits of the cytochrome b6-f complex are cytochrome b6, subunit IV (17 kDa polypeptide, PetD), cytochrome f and the Rieske protein, while the 4 small subunits are PetG, PetL, PetM and PetN. The complex functions as a dimer. Heme b is required as a cofactor. The cofactor is heme c.

It localises to the plastid. The protein localises to the chloroplast thylakoid membrane. Component of the cytochrome b6-f complex, which mediates electron transfer between photosystem II (PSII) and photosystem I (PSI), cyclic electron flow around PSI, and state transitions. The protein is Cytochrome b6 of Solanum bulbocastanum (Wild potato).